The chain runs to 918 residues: Exostosin-like 3 (918 aa).

At 1–30 (MTGYTMLRNGGVGNGGQTCMLRWSNRIRLT) the chain is on the cytoplasmic side. Residues 1-140 (MTGYTMLRNG…LKNVISQTEH (140 aa)) form a required for interaction with REG3A region. Residues 31 to 51 (WLSFTLFIILVFFPLIAHYYL) form a helical; Signal-anchor for type II membrane protein membrane-spanning segment. Residues 52–918 (TTLDEADEAG…HDKTKCFKFI (867 aa)) lie on the Lumenal side of the membrane. 2 cysteine pairs are disulfide-bonded: C177–C182 and C188–C236. The N-linked (GlcNAc...) asparagine glycan is linked to N290. Residue S361 is modified to Phosphoserine. C399 and C414 are disulfide-bonded. An N-linked (GlcNAc...) asparagine glycan is attached at N591. Positions 667, 671, 696, 722, 727, 743, 744, and 745 each coordinate UDP-N-acetyl-alpha-D-glucosamine. D745 provides a ligand contact to Mn(2+). An N-linked (GlcNAc...) asparagine glycan is attached at N789. A disulfide bridge links C830 with C878. The UDP-N-acetyl-alpha-D-glucosamine site is built by E831, D832, and R875. D832 is a catalytic residue.

The protein belongs to the glycosyltransferase 47 family. As to quaternary structure, homodimer; disulfide-linked. Interacts with REG3A. The cofactor is Mn(2+). In terms of tissue distribution, expressed in pancreatic islet beta-cells. Expressed in lung epithelial cells. Expressed in microglia.

It is found in the endoplasmic reticulum membrane. The protein resides in the golgi apparatus. Its subcellular location is the cell membrane. The protein localises to the nucleus. The catalysed reaction is 3-O-(beta-D-GlcA-(1-&gt;3)-beta-D-Gal-(1-&gt;3)-beta-D-Gal-(1-&gt;4)-beta-D-Xyl)-L-seryl-[protein] + UDP-N-acetyl-alpha-D-glucosamine = 3-O-(alpha-D-GlcNAc-(1-&gt;4)-beta-D-GlcA-(1-&gt;3)-beta-D-Gal-(1-&gt;3)-beta-D-Gal-(1-&gt;4)-beta-D-Xyl)-L-seryl-[protein] + UDP + H(+). Its pathway is glycan metabolism; heparan sulfate biosynthesis. Functionally, glycosyltransferase which regulates the biosynthesis of heparan sulfate (HS). Initiates HS synthesis by transferring the first N-acetyl-alpha-D-glucosamine (alpha-GlcNAc) residue (GlcNAcT-I activity) to the tetrasaccharide linker (GlcA-Gal-Gal-Xyl-)Ser core linker. May also transfer alpha-GlcNAc residues during HS elongation (GlcNAcT-II activity). Lacks glucuronyl transferase II (GlcAT-II) activity. Important for both skeletal development and hematopoiesis, through the formation of HS proteoglycans (HSPGs). Through the synthesis of HS, regulates postnatal pancreatic islet maturation and insulin secretion. In terms of biological role, receptor for REG3A, REG3B and REG3G, induces the activation of downstream signaling pathways such as PI3K-AKT or RAS-RAF-MEK-ERK signaling pathway. Required for the function of REG3A in regulating keratinocyte proliferation and differentiation. Required for the inhibition of skin inflammation mediated by REG3A through the activation of PI3K-AKT-STAT3 pathway. Required for the function of REG3A and REG3G in glucose tolerance in pancreas. Expressed in microglia, is activated by nociceptor-derived REG3G in response to endotoxins, leading to the inhibition of kynurenine pathway to prevent endotoxic death. This is Exostosin-like 3 from Mus musculus (Mouse).